The chain runs to 232 residues: Orotidine 5'-phosphate decarboxylase (232 aa).

Substrate is bound by residues aspartate 13, lysine 35, 62–71 (DLKFHDIPNT), threonine 122, arginine 182, glutamine 191, glycine 211, and arginine 212. The active-site Proton donor is the lysine 64.

This sequence belongs to the OMP decarboxylase family. Type 1 subfamily. Homodimer.

The catalysed reaction is orotidine 5'-phosphate + H(+) = UMP + CO2. It participates in pyrimidine metabolism; UMP biosynthesis via de novo pathway; UMP from orotate: step 2/2. Functionally, catalyzes the decarboxylation of orotidine 5'-monophosphate (OMP) to uridine 5'-monophosphate (UMP). The protein is Orotidine 5'-phosphate decarboxylase of Pseudomonas savastanoi pv. phaseolicola (strain 1448A / Race 6) (Pseudomonas syringae pv. phaseolicola (strain 1448A / Race 6)).